A 443-amino-acid polypeptide reads, in one-letter code: C4-dicarboxylate transport protein (443 aa).

Transmembrane regions (helical) follow at residues 10-30 (SLYF…HFYP), 46-66 (LIKM…IAGM), 78-98 (YALL…LIVV), 130-150 (SIVG…FANG), 152-172 (ILQV…LGAY), 199-219 (PLGA…GSLV), 224-244 (LMIC…GAIC), 291-311 (VVGL…SIYL), 332-352 (ITLL…TGSG), and 354-374 (IVLA…LALI). Residues 415-443 (ELASGGRPITDTRETDDLGVAEGPAPSIK) form a disordered region.

Belongs to the dicarboxylate/amino acid:cation symporter (DAACS) (TC 2.A.23) family.

It localises to the cell inner membrane. Responsible for the transport of dicarboxylates such as succinate, fumarate, and malate from the periplasm across the membrane. The protein is C4-dicarboxylate transport protein of Pseudomonas fluorescens (strain ATCC BAA-477 / NRRL B-23932 / Pf-5).